The primary structure comprises 143 residues: Crossover junction endodeoxyribonuclease Hjc (143 aa).

E12 contributes to the Mg(2+) binding site. Residue S32 is part of the active site. The Mg(2+) site is built by D42 and E55.

This sequence belongs to the Holliday junction resolvase Hjc family. In terms of assembly, homodimer. Requires Mg(2+) as cofactor.

The catalysed reaction is Endonucleolytic cleavage at a junction such as a reciprocal single-stranded crossover between two homologous DNA duplexes (Holliday junction).. A structure-specific endonuclease that resolves Holliday junction (HJ) intermediates during genetic recombination. Cleaves 4-way DNA junctions introducing paired nicks in opposing strands, leaving a 5'-terminal phosphate and a 3'-terminal hydroxyl group that are subsequently ligated to produce recombinant products. Its function is as follows. Hjc, Hjm (Hel308) and PINA coordinate HJ migration and cleavage of replication forks in a coordinated way. This is Crossover junction endodeoxyribonuclease Hjc from Saccharolobus islandicus (strain REY15A) (Sulfolobus islandicus).